The sequence spans 351 residues: MIRAAIVGATGYTGAELVRLLARHREVELVGLTSRQYADQPYANVYPHLSGQVDLACQSQDIDHITDMADVVFLALPHGLSVPWVAECVRKGKKVVDLGADFRLRRAAVYEQWYHVTHEAPELLAEAVYGLPELKREQIQKARIIANPGCYPTASLLSIAPLCGQGLIREDRLIIDAKSGVSGAGRNANLAIIYGEVNENVKAYNVAKHRHNPEIEQEVAERAGLDPDAMAITFTPHLMPMTRGILTTVYADLKEGVQPTSEEVRNLYRQFYAGEPFIHVMDEGVWPQTKWSYGSNHAYIGLTVEARTGRVIITTAIDNLVKGASGQAIQNMNILFGLPETTGIEAAGIYP.

The active site involves cysteine 150.

This sequence belongs to the NAGSA dehydrogenase family. Type 1 subfamily.

The protein localises to the cytoplasm. It carries out the reaction N-acetyl-L-glutamate 5-semialdehyde + phosphate + NADP(+) = N-acetyl-L-glutamyl 5-phosphate + NADPH + H(+). The protein operates within amino-acid biosynthesis; L-arginine biosynthesis; N(2)-acetyl-L-ornithine from L-glutamate: step 3/4. In terms of biological role, catalyzes the NADPH-dependent reduction of N-acetyl-5-glutamyl phosphate to yield N-acetyl-L-glutamate 5-semialdehyde. The sequence is that of N-acetyl-gamma-glutamyl-phosphate reductase from Heliobacterium modesticaldum (strain ATCC 51547 / Ice1).